The primary structure comprises 158 residues: MSNYDYIEMKVPAKPEYVGVARLTLSGVANRMGFSYESIEDLKVAVSEAITNAVNHAYNDNESGEINIGFGIYEDHIEIMIADRGESFDLEKIKQETGPYHPEEPVEKLREGGFGLFLIEALMDDVKINNQYGVMIMMSKYIAEEEVDMDDDQISTTQ.

It belongs to the anti-sigma-factor family.

The enzyme catalyses L-seryl-[protein] + ATP = O-phospho-L-seryl-[protein] + ADP + H(+). The catalysed reaction is L-threonyl-[protein] + ATP = O-phospho-L-threonyl-[protein] + ADP + H(+). Negative regulator of sigma-B activity. Phosphorylates and inactivates its specific antagonist protein, RsbV. Upon phosphorylation of RsbV, RsbW is released and binds to sigma-B, thereby blocking its ability to form an RNA polymerase holoenzyme (E-sigma-B). This chain is Serine-protein kinase RsbW, found in Oceanobacillus iheyensis (strain DSM 14371 / CIP 107618 / JCM 11309 / KCTC 3954 / HTE831).